A 143-amino-acid chain; its full sequence is MSLSTKDKETVKDLWGHISASADAIGADALGRLLVVYPQTKIYFLHWPDLSPNSPSVKNHGKNIMSGIALAVTKIDDLKSGLNALSEQHAFQLRVDPANFKLLSHCILVVLAIRFPHEFTPEAHVAMDKFFCGVSLALAEKYR.

Serine 2 bears the N-acetylserine mark. Positions 2–143 constitute a Globin domain; it reads SLSTKDKETV…VSLALAEKYR (142 aa). Histidine 60 contributes to the O2 binding site. Histidine 89 contacts heme b.

The protein belongs to the globin family. Hb1 is a heterotetramer of two alpha-1 chains and two beta-1 chains. Red blood cells.

Functionally, involved in oxygen transport from gills to the various peripheral tissues. The protein is Hemoglobin subunit alpha-1 of Liparis tunicatus (Kelp snailfish).